A 114-amino-acid chain; its full sequence is Ribonuclease P protein component (114 aa).

This sequence belongs to the RnpA family. In terms of assembly, consists of a catalytic RNA component (M1 or rnpB) and a protein subunit.

The catalysed reaction is Endonucleolytic cleavage of RNA, removing 5'-extranucleotides from tRNA precursor.. In terms of biological role, RNaseP catalyzes the removal of the 5'-leader sequence from pre-tRNA to produce the mature 5'-terminus. It can also cleave other RNA substrates such as 4.5S RNA. The protein component plays an auxiliary but essential role in vivo by binding to the 5'-leader sequence and broadening the substrate specificity of the ribozyme. The protein is Ribonuclease P protein component of Borrelia duttonii (strain Ly).